The following is a 325-amino-acid chain: Germination protease (325 aa).

Residues 1–7 constitute a propeptide that is removed on maturation; it reads MYNVRTD.

This sequence belongs to the peptidase A25 family. In terms of assembly, homotetramer. In terms of processing, autoproteolytically processed. The inactive tetrameric zymogen termed p46 autoprocesses to a smaller form termed p41, which is active only during spore germination.

The enzyme catalyses Endopeptidase action with P4 Glu or Asp, P1 preferably Glu &gt; Asp, P1' hydrophobic and P2' Ala.. Initiates the rapid degradation of small, acid-soluble proteins during spore germination. This Clostridium perfringens (strain SM101 / Type A) protein is Germination protease.